We begin with the raw amino-acid sequence, 448 residues long: Methionine aminopeptidase 2-1 (448 aa).

A disordered region spans residues 1–83 (MAAQVIPELQ…TQKAQTEPPR (83 aa)). A compositionally biased stretch (acidic residues) spans 32-48 (ENEDGDSEDDNGDDQGA). Positions 59–73 (AKKKKKKKPKKKKKD) are enriched in basic residues. His-198 is a binding site for substrate. A divalent metal cation contacts are provided by Asp-218, Asp-229, and His-298. Substrate is bound at residue His-306. A divalent metal cation-binding residues include Glu-334 and Glu-429.

This sequence belongs to the peptidase M24A family. Methionine aminopeptidase eukaryotic type 2 subfamily. Co(2+) is required as a cofactor. Requires Zn(2+) as cofactor. Mn(2+) serves as cofactor. It depends on Fe(2+) as a cofactor.

It localises to the cytoplasm. The enzyme catalyses Release of N-terminal amino acids, preferentially methionine, from peptides and arylamides.. Functionally, cotranslationally removes the N-terminal methionine from nascent proteins. The N-terminal methionine is often cleaved when the second residue in the primary sequence is small and uncharged (Met-Ala-, Cys, Gly, Pro, Ser, Thr, or Val). In Ajellomyces capsulatus (strain G186AR / H82 / ATCC MYA-2454 / RMSCC 2432) (Darling's disease fungus), this protein is Methionine aminopeptidase 2-1.